Reading from the N-terminus, the 456-residue chain is Chromosomal replication initiator protein DnaA (456 aa).

Residues 1–85 (MDADLNKLWE…EIKFIIESDL (85 aa)) form a domain I, interacts with DnaA modulators region. Residues 85–117 (LNNEDELNNSDNSDKNRDKNSRRNIVVNDEMSS) are domain II. Positions 118-334 (TLNPKYTFNS…GALIRIIAYS (217 aa)) are domain III, AAA+ region. Glycine 162, glycine 164, lysine 165, and threonine 166 together coordinate ATP. The interval 335–456 (SLTNREVTVD…SDITKKVSQN (122 aa)) is domain IV, binds dsDNA.

The protein belongs to the DnaA family. In terms of assembly, oligomerizes as a right-handed, spiral filament on DNA at oriC.

The protein localises to the cytoplasm. Its function is as follows. Plays an essential role in the initiation and regulation of chromosomal replication. ATP-DnaA binds to the origin of replication (oriC) to initiate formation of the DNA replication initiation complex once per cell cycle. Binds the DnaA box (a 9 base pair repeat at the origin) and separates the double-stranded (ds)DNA. Forms a right-handed helical filament on oriC DNA; dsDNA binds to the exterior of the filament while single-stranded (ss)DNA is stabiized in the filament's interior. The ATP-DnaA-oriC complex binds and stabilizes one strand of the AT-rich DNA unwinding element (DUE), permitting loading of DNA polymerase. After initiation quickly degrades to an ADP-DnaA complex that is not apt for DNA replication. Binds acidic phospholipids. This Clostridium botulinum (strain Eklund 17B / Type B) protein is Chromosomal replication initiator protein DnaA.